Reading from the N-terminus, the 213-residue chain is Cytochrome b6 (213 aa).

A helical membrane pass occupies residues 30–50 (IFYCLGGLTLLCFIIQCLTGV). Residue cysteine 33 participates in heme c binding. Heme b is bound by residues histidine 84 and histidine 98. 3 helical membrane-spanning segments follow: residues 88 to 108 (CQLM…TGAF), 114 to 134 (LNWV…FTGY), and 184 to 204 (LHVM…FIMI). Heme b is bound by residues histidine 185 and histidine 200.

The protein belongs to the cytochrome b family. PetB subfamily. As to quaternary structure, the subunits of the cytochrome bc complex are a Rieske Fe-S protein (PetC), cytochrome b6 (PetB), subunit IV (PetD), and a diheme cytochrome c (PetX). Requires heme b as cofactor. The cofactor is heme c.

The protein resides in the cell membrane. Component of the cytochrome bc complex which donates electrons to the photosynthetic reaction center. The chain is Cytochrome b6 from Heliobacterium modesticaldum (strain ATCC 51547 / Ice1).